The sequence spans 218 residues: Transmembrane gamma-carboxyglutamic acid protein 1 (218 aa).

The propeptide occupies 1 to 20 (MGRVFLTGEKANSVLKRYPR). Positions 20–66 (RANGFFEEIRQGNIERECKEEFCTFEEAREAFENNEKTKEFWSTYTK) constitute a Gla domain. Residues 21-80 (ANGFFEEIRQGNIERECKEEFCTFEEAREAFENNEKTKEFWSTYTKAQQGESNRGSDWFQ) are Extracellular-facing. Cys37 and Cys42 are joined by a disulfide. Residues 81-101 (FYLTFPLIFGLFIILLVIFLI) traverse the membrane as a helical segment. Residues 102–218 (WRCFLRNKTR…PMVPVVTTIK (117 aa)) are Cytoplasmic-facing. The tract at residues 161-195 (TRLSNCDPPPTYEEATGQVNLQRSETEPHLDPPPE) is disordered.

Gla residues are produced after subsequent post-translational modifications of glutamate by a vitamin K-dependent gamma-carboxylase.

The protein localises to the membrane. This Pongo abelii (Sumatran orangutan) protein is Transmembrane gamma-carboxyglutamic acid protein 1 (PRRG1).